Consider the following 768-residue polypeptide: Multidomain esterase (768 aa).

Positions 1–40 are cleaved as a signal peptide; sequence MKKHFVVGETIKRFLRIGTSLALSISTLSLLPSAPRLSSA. An acetylxylan esterase region spans residues 41-264; sequence AGTIKIMPLG…YWLEQIEGYL (224 aa). The Nucleophile; for acetylxylan esterase activity role is filled by S68. Active-site for acetylxylan esterase activity residues include D240 and H243. Residues 267 to 283 are compositionally biased toward low complexity; that stretch reads SDGPQQTQPTQPSQGDS. A disordered region spans residues 267–289; it reads SDGPQQTQPTQPSQGDSGPELIY. The Dockerin domain occupies 285–352; it reads PELIYGDLDG…IIGKIKEFTV (68 aa). The interval 353–768 is glucuronoyl esterase; that stretch reads AEKTVTEKPV…ADTFASKWLY (416 aa). Residues 563-568 carry the GXSYXG catalytic site motif motif; that stretch reads GVSRYG. The active-site Nucleophile; for glucuronoyl esterase activity is the S565. Positions 569, 633, and 679 each coordinate substrate.

In the N-terminal section; belongs to the carbohydrate esterase 3 (CE3) family. The protein in the C-terminal section; belongs to the carbohydrate esterase 15 (CE15) family.

The protein resides in the secreted. The enzyme catalyses Deacetylation of xylans and xylo-oligosaccharides.. It carries out the reaction a 4-O-methyl-alpha-D-glucuronosyl ester derivative + H2O = 4-O-methyl-alpha-D-glucuronate derivative + an alcohol + H(+). The protein operates within glycan degradation; xylan degradation. Functionally, esterase involved in the degradation of plant cell wall polysaccharides. Catalyzes the deacetylation of chemically acetylated xylan and native, steam-extracted xylan. Seems to act in synergy with the xylanase XynD which produces xylo-oligosaccharides. Also catalyzes the deesterification of methyl esters of 4-O-methyl-D-glucuronic acid (MeGlcA) side residues in synthetic glucuronoxylan methyl ester, suggesting that it may be able to cleave ester linkages between MeGlcA carboxyl and more complex alcohols, including linkages between hemicellulose and lignin alcohols in plant cell walls. This Ruminococcus flavefaciens protein is Multidomain esterase.